Reading from the N-terminus, the 253-residue chain is Small ribosomal subunit protein uS2 (253 aa).

It belongs to the universal ribosomal protein uS2 family.

The protein is Small ribosomal subunit protein uS2 of Hahella chejuensis (strain KCTC 2396).